We begin with the raw amino-acid sequence, 236 residues long: 15,16-dihydrobiliverdin:ferredoxin oxidoreductase (236 aa).

Belongs to the HY2 family.

It carries out the reaction 15,16-dihydrobiliverdin + oxidized 2[4Fe-4S]-[ferredoxin] = biliverdin IXalpha + reduced 2[4Fe-4S]-[ferredoxin] + 2 H(+). In terms of biological role, catalyzes the two-electron reduction of biliverdin IX-alpha at the C15 methine bridge. The polypeptide is 15,16-dihydrobiliverdin:ferredoxin oxidoreductase (pebA) (Synechococcus sp. (strain WH8020)).